A 140-amino-acid polypeptide reads, in one-letter code: UPF0336 protein TW736 (140 aa).

The protein belongs to the UPF0336 family.

This Tropheryma whipplei (strain TW08/27) (Whipple's bacillus) protein is UPF0336 protein TW736.